A 248-amino-acid chain; its full sequence is Putative imidazole glycerol phosphate synthase subunit hisF2 (248 aa).

The active site involves aspartate 129.

It belongs to the HisA/HisF family. Heterodimer of HisH and HisF.

It localises to the cytoplasm. It catalyses the reaction 5-[(5-phospho-1-deoxy-D-ribulos-1-ylimino)methylamino]-1-(5-phospho-beta-D-ribosyl)imidazole-4-carboxamide + L-glutamine = D-erythro-1-(imidazol-4-yl)glycerol 3-phosphate + 5-amino-1-(5-phospho-beta-D-ribosyl)imidazole-4-carboxamide + L-glutamate + H(+). The protein operates within amino-acid biosynthesis; L-histidine biosynthesis; L-histidine from 5-phospho-alpha-D-ribose 1-diphosphate: step 5/9. Functionally, IGPS catalyzes the conversion of PRFAR and glutamine to IGP, AICAR and glutamate. The HisF subunit catalyzes the cyclization activity that produces IGP and AICAR from PRFAR using the ammonia provided by the HisH subunit. This is Putative imidazole glycerol phosphate synthase subunit hisF2 (hisF2) from Campylobacter jejuni subsp. jejuni serotype O:2 (strain ATCC 700819 / NCTC 11168).